Here is a 119-residue protein sequence, read N- to C-terminus: Large ribosomal subunit protein bL20 (119 aa).

The protein belongs to the bacterial ribosomal protein bL20 family.

Functionally, binds directly to 23S ribosomal RNA and is necessary for the in vitro assembly process of the 50S ribosomal subunit. It is not involved in the protein synthesizing functions of that subunit. In Paracoccus denitrificans (strain Pd 1222), this protein is Large ribosomal subunit protein bL20.